Consider the following 39-residue polypeptide: Photosystem II reaction center protein J (39 aa).

The helical transmembrane segment at 7-27 (IPLWLIATVGGTAALTVVGLF) threads the bilayer.

The protein belongs to the PsbJ family. In terms of assembly, PSII is composed of 1 copy each of membrane proteins PsbA, PsbB, PsbC, PsbD, PsbE, PsbF, PsbH, PsbI, PsbJ, PsbK, PsbL, PsbM, PsbT, PsbX, PsbY, PsbZ, Psb30/Ycf12, at least 3 peripheral proteins of the oxygen-evolving complex and a large number of cofactors. It forms dimeric complexes.

It is found in the plastid. The protein localises to the chloroplast thylakoid membrane. One of the components of the core complex of photosystem II (PSII). PSII is a light-driven water:plastoquinone oxidoreductase that uses light energy to abstract electrons from H(2)O, generating O(2) and a proton gradient subsequently used for ATP formation. It consists of a core antenna complex that captures photons, and an electron transfer chain that converts photonic excitation into a charge separation. The polypeptide is Photosystem II reaction center protein J (Rhodomonas salina (Cryptomonas salina)).